The chain runs to 174 residues: Secreted protein A (174 aa).

The N-terminal stretch at M1–A19 is a signal peptide. A glycan (N-linked (GlcNAc...) asparagine) is linked at N156.

Belongs to the Sct family. Post-translationally, probably contains disulfide bonds.

The protein resides in the secreted. Its subcellular location is the extracellular vesicle. The polypeptide is Secreted protein A (p17) (Dictyostelium discoideum (Social amoeba)).